We begin with the raw amino-acid sequence, 301 residues long: NAD kinase (301 aa).

D73 serves as the catalytic Proton acceptor. Residues 73 to 74 (DG), 160 to 161 (NE), R188, D190, A198, 201 to 206 (TAYNIS), A225, and Q257 each bind NAD(+).

It belongs to the NAD kinase family. It depends on a divalent metal cation as a cofactor.

Its subcellular location is the cytoplasm. It catalyses the reaction NAD(+) + ATP = ADP + NADP(+) + H(+). Its function is as follows. Involved in the regulation of the intracellular balance of NAD and NADP, and is a key enzyme in the biosynthesis of NADP. Catalyzes specifically the phosphorylation on 2'-hydroxyl of the adenosine moiety of NAD to yield NADP. The chain is NAD kinase from Helicobacter hepaticus (strain ATCC 51449 / 3B1).